Here is a 238-residue protein sequence, read N- to C-terminus: 2-C-methyl-D-erythritol 4-phosphate cytidylyltransferase (238 aa).

It belongs to the IspD/TarI cytidylyltransferase family. IspD subfamily.

The catalysed reaction is 2-C-methyl-D-erythritol 4-phosphate + CTP + H(+) = 4-CDP-2-C-methyl-D-erythritol + diphosphate. Its pathway is isoprenoid biosynthesis; isopentenyl diphosphate biosynthesis via DXP pathway; isopentenyl diphosphate from 1-deoxy-D-xylulose 5-phosphate: step 2/6. In terms of biological role, catalyzes the formation of 4-diphosphocytidyl-2-C-methyl-D-erythritol from CTP and 2-C-methyl-D-erythritol 4-phosphate (MEP). The chain is 2-C-methyl-D-erythritol 4-phosphate cytidylyltransferase from Acinetobacter baumannii (strain ATCC 17978 / DSM 105126 / CIP 53.77 / LMG 1025 / NCDC KC755 / 5377).